A 376-amino-acid chain; its full sequence is Fibromodulin (376 aa).

A signal peptide spans 1-18; sequence MQWTSLLLLAGLFSLSQA. Pyrrolidone carboxylic acid is present on Gln-19. Residues Tyr-20, Tyr-38, Tyr-39, Tyr-45, Tyr-47, Tyr-53, and Tyr-55 each carry the sulfotyrosine modification. One can recognise an LRRNT domain in the interval 67–105; the sequence is SPSPPDPRDCPQECDCPPNFPTAMYCDNRNLKYLPFVPS. LRR repeat units lie at residues 106–127, 130–151, 156–176, 177–198, 201–222, 224–245, 246–266, and 269–289; these read RMKY…VFDN, GLLW…RKVF, HLER…PLPR, SLRE…ALEG, NLTA…MRGL, SLIL…LPSA, LEQL…YFRG, and KLLY…ASNT. A glycan (N-linked (GlcNAc...) (keratan sulfate) asparagine) is linked at Asn-127. An N-linked (GlcNAc...) (keratan sulfate) asparagine glycan is attached at Asn-166. Residue Asn-201 is glycosylated (N-linked (GlcNAc...) (keratan sulfate) asparagine). An N-linked (GlcNAc...) (keratan sulfate) asparagine glycan is attached at Asn-291. LRR repeat units follow at residues 294-315 and 316-335; these read SLLE…NTNL and ENLY…SFCT. Cys-334 and Cys-367 are oxidised to a cystine. Asn-341 carries an N-linked (GlcNAc...) asparagine glycan. The LRR 11 repeat unit spans residues 344 to 365; sequence KLQVLRLDGNEIKRSAMPADAP.

It belongs to the small leucine-rich proteoglycan (SLRP) family. SLRP class II subfamily. In terms of assembly, binds to type I and type II collagen. In terms of processing, binds keratan sulfate chains.

Its subcellular location is the secreted. The protein localises to the extracellular space. It is found in the extracellular matrix. Functionally, affects the rate of fibrils formation. May have a primary role in collagen fibrillogenesis. This is Fibromodulin (FMOD) from Homo sapiens (Human).